The primary structure comprises 418 residues: Torsin-4A-B (418 aa).

The chain crosses the membrane as a helical span at residues 128-144; it reads CLLLFVGIVCFQIFNAI. ATP is bound at residue 200–207; it reads GPSGVGKS.

It belongs to the ClpA/ClpB family. Torsin subfamily.

The protein resides in the membrane. The protein is Torsin-4A-B (tor4a-b) of Xenopus laevis (African clawed frog).